A 184-amino-acid polypeptide reads, in one-letter code: Photosystem I assembly protein Ycf4 (184 aa).

The next 2 helical transmembrane spans lie at 20-40 (GNFFWAFILFLGSLGFLVVGI) and 64-84 (IVMSFYGIAGLFISSYLWCTI).

It belongs to the Ycf4 family.

It is found in the plastid. The protein resides in the chloroplast thylakoid membrane. Functionally, seems to be required for the assembly of the photosystem I complex. This chain is Photosystem I assembly protein Ycf4, found in Citrus sinensis (Sweet orange).